Reading from the N-terminus, the 134-residue chain is Profilin-2 (134 aa).

The cysteines at positions 13 and 118 are disulfide-linked. Residues 84 to 100 (AVIRGKKGSGGITIKKT) carry the Involved in PIP2 interaction motif. Phosphothreonine is present on T114.

Belongs to the profilin family. As to quaternary structure, occurs in many kinds of cells as a complex with monomeric actin in a 1:1 ratio. In terms of processing, phosphorylated by MAP kinases.

The protein resides in the cytoplasm. It is found in the cytoskeleton. Binds to actin and affects the structure of the cytoskeleton. At high concentrations, profilin prevents the polymerization of actin, whereas it enhances it at low concentrations. This is Profilin-2 from Olea europaea (Common olive).